A 23-amino-acid chain; its full sequence is Acetylcholine receptor subunit gamma (23 aa).

The protein belongs to the ligand-gated ion channel (TC 1.A.9) family. Acetylcholine receptor (TC 1.A.9.1) subfamily. Gamma/CHRNG sub-subfamily. Pentamer of two alpha chains, and one each of the beta, delta, and gamma chains.

It is found in the postsynaptic cell membrane. The protein localises to the cell membrane. It carries out the reaction K(+)(in) = K(+)(out). It catalyses the reaction Na(+)(in) = Na(+)(out). In terms of biological role, after binding acetylcholine, the AChR responds by an extensive change in conformation that affects all subunits and leads to opening of an ion-conducting channel across the plasma membrane. In Electrophorus electricus (Electric eel), this protein is Acetylcholine receptor subunit gamma (chrng).